Here is a 308-residue protein sequence, read N- to C-terminus: Solute carrier family 25 member 47 (308 aa).

Solcar repeat units lie at residues 1–80 (MDFV…CLAH), 93–206 (PTKA…LCEW), and 215–302 (PDVP…VLRL). 6 helical membrane-spanning segments follow: residues 3–23 (FVAGAIGGVCGVAVGYPLDTV), 49–69 (VWGFYRGLSLPVCTVSLVSSV), 98–116 (ITLSGCASGLVRVFLTSPT), 190–210 (GHSFATYFLSYAVLCEWLSPA), 217–237 (VPGVLVAGGCAGVLAWAVATP), and 273–293 (VLFKGLVLNCCRAFPVNMVVF).

Belongs to the mitochondrial carrier (TC 2.A.29) family. In terms of tissue distribution, specifically expressed in liver.

The protein resides in the mitochondrion inner membrane. The protein localises to the mitochondrion outer membrane. It carries out the reaction NAD(+)(in) = NAD(+)(out). The enzyme catalyses acetyl-CoA(in) = acetyl-CoA(out). Functionally, mitochondrial NAD(+) transporter that acts as a 'metabolic gate' in hepatic lipogenesis. Provides NAD(+) substrate to mitochondrial SIRT3 deacetylase and enables its NAD(+)-dependent activities in mitochondrial energy metabolism. This triggers downstream activation of PRKAA1/AMPK-alpha signaling cascade that negatively regulates sterol regulatory element-binding protein (SREBP) transcriptional activities and ATP-consuming lipogenesis to restore cellular energy balance. May transport other mitochondrial metabolites having an aromatic nucleotide and phosphate groups, such as acetyl-CoA. Does not transport amino acids. The transport mechanism remains to be elucidated. This chain is Solute carrier family 25 member 47, found in Homo sapiens (Human).